Consider the following 630-residue polypeptide: Neuronal acetylcholine receptor subunit alpha-4 (630 aa).

The N-terminal stretch at 1–30 (MANSGTGAPPPLLLLPLLLLLGTGLLPASS) is a signal peptide. Residues 32 to 249 (IETRAHAEER…IIRRLPLFYT (218 aa)) are Extracellular-facing. A glycan (N-linked (GlcNAc...) asparagine) is linked at Asn-59. 2 residues coordinate Ca(2+): Val-78 and Glu-80. 2 N-linked (GlcNAc...) asparagine glycosylation sites follow: Asn-109 and Asn-176. 2 cysteine pairs are disulfide-bonded: Cys-163/Cys-177 and Cys-227/Cys-228. Residues 250–270 (INLIIPCLLISCLTVLVFYLP) form a helical membrane-spanning segment. Cys-273 carries S-palmitoyl cysteine lipidation. Helical transmembrane passes span 279–299 (LCIS…EIIP) and 313–333 (LLFT…VLNV). Topologically, residues 334-604 (HHRSPRTHTM…WKYVAMVIDR (271 aa)) are cytoplasmic. Disordered stretches follow at residues 418–463 (TAVE…SGAP) and 505–526 (SLAD…SQLP). Ser-428 bears the Phosphoserine mark. Positions 434-443 (PDLKTSEVEK) are enriched in basic and acidic residues. The segment covering 447-457 (CPSPGSCPPPK) has biased composition (pro residues). Phosphoserine is present on residues Ser-542 and Ser-545. A helical membrane pass occupies residues 605 to 625 (IFLWMFIIVCLLGTVGLFLPP).

Belongs to the ligand-gated ion channel (TC 1.A.9) family. Acetylcholine receptor (TC 1.A.9.1) subfamily. Alpha-4/CHRNA4 sub-subfamily. In terms of assembly, neuronal AChR is composed of two different types of subunits: alpha and beta. CHRNA4 forms heteropentameric neuronal acetylcholine receptors with CHRNB2 and CHRNB4, as well as CHRNA5 and CHRNB3 as accesory subunits. Found in two major stoichiometric forms, LS (low agonist sensitivity): (CHRNA4)3:(CHRNB2)2 and HS (high agonist sensitivity): (CHRNA4)2:(CHRNB2)3, the two stoichiometric forms differ in their unitary conductance, calcium permeability, ACh sensitivity and potentiation by divalent cation. Cells produce predominantly an (CHRNA4)3:(CHRNB2)2 nAChR. The (CHRNA4)2:(CHRNB2)3 expression is selectively up-regulated by nicotine and has lower single channel conductance and calcium permeability. In the striatum, also forms CHRNA4:CHRNA6:CHRNB2 complexes. Also found in the stoichiometric form: (CHRNA4:CHRNB2)2:CHRNB3. Interacts with RIC3; which is required for proper folding and assembly. Interacts with LYPD6. As to expression, in various regions of the central nervous system. Expressed in hippocampal neurons.

The protein localises to the presynaptic cell membrane. Its subcellular location is the cell membrane. It carries out the reaction Ca(2+)(in) = Ca(2+)(out). The catalysed reaction is K(+)(in) = K(+)(out). The enzyme catalyses Na(+)(in) = Na(+)(out). Its activity is regulated as follows. Activated by a myriad of ligands such as acetylcholine, cytisine, nicotine, choline and epibatidine. Channel potentiation by calcium is stoichiometry-selective, CHRNA4:CHRNB2 nACh receptor is achieved by calcium association with topographically distinct sites framed by anionic residues within the CHRNA4 subunit and between the CHRNA4 and CHRNB2 subunits. nAChR activity is inhibited by the antagonist alpha-conotoxins BuIA, PnIA, GID and MII, small disulfide-constrained peptides from cone snails. Functionally, component of neuronal acetylcholine receptors (nAChRs) that function as pentameric, ligand-gated cation channels with high calcium permeability among other activities. nAChRs are excitatory neurotrasnmitter receptors formed by a collection of nAChR subunits known to mediate synaptic transmission in the nervous system and the neuromuscular junction. Each nAchR subunit confers differential attributes to channel properties, including activation, deactivation and desensitization kinetics, pH sensitivity, cation permeability, and binding to allosteric modulators. CHRNA4 forms heteropentameric neuronal acetylcholine receptors with CHRNB2 and CHRNB4, as well as CHRNA5 and CHRNB3 as accesory subunits. Is the most abundant nAChR subtype expressed in the central nervous system. Found in two major stoichiometric forms,(CHRNA4)3:(CHRNB2)2 and (CHRNA4)2:(CHRNB2)3, the two stoichiometric forms differ in their unitary conductance, calcium permeability, ACh sensitivity and potentiation by divalent cation. Involved in the modulation of calcium-dependent signaling pathways, influences the release of neurotransmitters, including dopamine, glutamate and GABA. This chain is Neuronal acetylcholine receptor subunit alpha-4 (Chrna4), found in Rattus norvegicus (Rat).